A 122-amino-acid chain; its full sequence is Large ribosomal subunit protein uL22 (122 aa).

This sequence belongs to the universal ribosomal protein uL22 family. Part of the 50S ribosomal subunit.

In terms of biological role, this protein binds specifically to 23S rRNA; its binding is stimulated by other ribosomal proteins, e.g. L4, L17, and L20. It is important during the early stages of 50S assembly. It makes multiple contacts with different domains of the 23S rRNA in the assembled 50S subunit and ribosome. Functionally, the globular domain of the protein is located near the polypeptide exit tunnel on the outside of the subunit, while an extended beta-hairpin is found that lines the wall of the exit tunnel in the center of the 70S ribosome. This is Large ribosomal subunit protein uL22 from Prochlorococcus marinus (strain MIT 9303).